The following is a 492-amino-acid chain: GTPase Der (492 aa).

2 consecutive EngA-type G domains span residues 3 to 167 (FTLA…EKFE) and 207 to 382 (LQVA…DVWN). Residues 9 to 16 (GRPNVGKS), 56 to 60 (DSAGL), 119 to 122 (NKSE), 213 to 220 (GRPNAGKS), 260 to 264 (DTAGM), and 325 to 328 (NKWD) contribute to the GTP site. Residues 383–469 (RRVPTAALNR…RLTLRGQGDK (87 aa)) enclose the KH-like domain. The tract at residues 461–492 (LTLRGQGDKNPYKGKKKSTPSRLRKHLEGRKS) is disordered. The span at 472–492 (YKGKKKSTPSRLRKHLEGRKS) shows a compositional bias: basic residues.

It belongs to the TRAFAC class TrmE-Era-EngA-EngB-Septin-like GTPase superfamily. EngA (Der) GTPase family. As to quaternary structure, associates with the 50S ribosomal subunit.

Its function is as follows. GTPase that plays an essential role in the late steps of ribosome biogenesis. This chain is GTPase Der, found in Ruegeria sp. (strain TM1040) (Silicibacter sp.).